The primary structure comprises 386 residues: Patatin-14 (386 aa).

The first 23 residues, 1–23, serve as a signal peptide directing secretion; sequence MATTKSFLILFFMILATTSSTCA. The PNPLA domain occupies 32–229; sequence LSIDGGGIKG…TVGDPALLSL (198 aa). The GXGXXG signature appears at 36–41; the sequence is GGGIKG. Positions 75–79 match the GXSXG motif; it reads GTSTG. Residue S77 is the Nucleophile of the active site. N-linked (GlcNAc...) asparagine glycosylation is present at N115. D215 acts as the Proton acceptor in catalysis. Residues 215–217 carry the DGA/G motif; it reads DGG. A coiled-coil region spans residues 321-381; sequence ENALTGTTTE…LLSDRKKLRA (61 aa).

It belongs to the patatin family. In terms of tissue distribution, tuber.

Its subcellular location is the vacuole. Its function is as follows. Probable lipolytic acyl hydrolase (LAH), an activity which is thought to be involved in the response of tubers to pathogens. The sequence is that of Patatin-14 from Solanum tuberosum (Potato).